We begin with the raw amino-acid sequence, 310 residues long: Putative S-adenosyl-L-methionine-dependent methyltransferase MMAR_3534 (310 aa).

S-adenosyl-L-methionine contacts are provided by residues aspartate 131 and 160 to 161 (DL).

Belongs to the UPF0677 family.

In terms of biological role, exhibits S-adenosyl-L-methionine-dependent methyltransferase activity. This Mycobacterium marinum (strain ATCC BAA-535 / M) protein is Putative S-adenosyl-L-methionine-dependent methyltransferase MMAR_3534.